We begin with the raw amino-acid sequence, 227 residues long: Large ribosomal subunit protein bL25 (227 aa).

Belongs to the bacterial ribosomal protein bL25 family. CTC subfamily. In terms of assembly, part of the 50S ribosomal subunit; part of the 5S rRNA/L5/L18/L25 subcomplex. Contacts the 5S rRNA. Binds to the 5S rRNA independently of L5 and L18.

In terms of biological role, this is one of the proteins that binds to the 5S RNA in the ribosome where it forms part of the central protuberance. This is Large ribosomal subunit protein bL25 from Polaromonas sp. (strain JS666 / ATCC BAA-500).